We begin with the raw amino-acid sequence, 406 residues long: Prenyltransferase phqJ (406 aa).

A compositionally biased stretch (polar residues) spans 1 to 19 (MTVSTESNFPHGASTQKPQ). The disordered stretch occupies residues 1 to 23 (MTVSTESNFPHGASTQKPQSAEP). Position 99 (glutamate 99) interacts with brevianamide F. Residues arginine 113, lysine 200, and tyrosine 202 each contribute to the dimethylallyl diphosphate site. Tyrosine 204 provides a ligand contact to brevianamide F. Dimethylallyl diphosphate is bound by residues lysine 269, tyrosine 271, and tyrosine 340.

The protein belongs to the tryptophan dimethylallyltransferase family.

It participates in alkaloid biosynthesis. Prenyltransferase; part of the gene cluster that mediates the biosynthesis of paraherquamide, a fungal indole alkaloid that belongs to a family of natural products containing a characteristic bicyclo[2.2.2]diazaoctane core. The first steps in the biosynthesis of paraherquamide is the production of the beta-methyl-proline precursor from L-isoleucine. They require oxidation of a terminally hydroxylated L-isoleucine to the corresponding aldehyde by enzymes which have still to be identified. Spontaneous cyclization and dehydration would yield the 4-methyl pyrolline-5-carboxylic acid, which is then reduced by the pyrroline-5-carboxylate reductase phqD leading to the beta-methyl-proline precursor. The next step of paraherquamide biosynthesis involves coupling of beta-methyl-proline and L-tryptophan by the bimodular NRPS phqB, to produce a monooxopiperazine intermediate. The reductase (R) domain of phqB utilizes NADPH for hydride transfer to reduce the thioester bond of the T domain-tethered linear dipeptide to a hemithioaminal intermediate, which spontaneously cleaves the C-S bond to release the aldehyde product. This compound undergoes spontaneous cyclization and dehydration to give a dienamine which is reverse prenylated at C-2 by the reverse prenyltransferase phqJ. The other prenyltransferase present in the cluster, phqI may be a redundant gene in the pathway. During biosynthetic assembly, the key step to produce the polycyclic core is catalyzed by the bifunctional reductase and intramolecular [4+2] Diels-Alderase, phqE, resulting in formation of the [2.2.2] diazaoctane intermediate preparaherquamide. Following formation of preparaherquamide, an indole 2,3-epoxidation-initiated pinacol-like rearrangement is catalyzed by the phqK FAD-dependent monooxygenase. The prenyltransferase phqA, the cytochrome P450 monooxygenase phqL, and the FAD-linked oxidoreductase phqH (or the cytochrome P450 monooxygenase phqM), are proposed to be involved in the formation of the pyran ring. The FAD-dependent monooxygenase phqK is likely responsible for generation of the spiro-oxindole, and the N-methylation is likely mediated by the phqN methyltransferase leading to the isolable natural product paraherquamide F. However, the order of these biosynthetic steps has still to be determined. In late-stage paraherquamide biosynthesis, the third P450 monooxygenase, phqO, is probably responsible for the C-14 hydroxylation, transforming paraherquamide F to paraherquamide G, and paraherquamide E to the final product paraherquamide A. The expansion from the 6-membered ring pyran (in paraherquamides F and G) to the 7-membered dioxepin ring (in paraherquamides A and E) represents a poorly understood but intriguing process that probably involves the 2-oxoglutarate-dependent dioxygenase phqC. Finally, the remaining members of the paraherquamide cluster, including phqI as well as phqM (or phqH), do not have a clearly prescribed role and appear to be redundant. The sequence is that of Prenyltransferase phqJ from Penicillium fellutanum.